Consider the following 228-residue polypeptide: Chaperone protein FanE (228 aa).

The first 19 residues, 1 to 19 (MNKFISIIALCVFSSYANA), serve as a signal peptide directing secretion. Cys-157 and Cys-198 are disulfide-bonded.

It belongs to the periplasmic pilus chaperone family.

The protein localises to the periplasm. Mediates assembly of pili by forming soluble multimeric complexes with pili subunits as an intermediate step in the assembly process. This protein is involved in K99 pili assembly. The protein is Chaperone protein FanE (fanE) of Escherichia coli.